We begin with the raw amino-acid sequence, 946 residues long: Protein translocase subunit SecA (946 aa).

ATP-binding positions include Gln-87, 105–109, and Asp-524; that span reads GEGKT. The tract at residues 905–926 is disordered; that stretch reads APASDAAQRDPKNPASWGKIGR. 4 residues coordinate Zn(2+): Cys-930, Cys-932, Cys-941, and His-942.

The protein belongs to the SecA family. In terms of assembly, monomer and homodimer. Part of the essential Sec protein translocation apparatus which comprises SecA, SecYEG and auxiliary proteins SecDF-YajC and YidC. Requires Zn(2+) as cofactor.

It localises to the cell inner membrane. The protein resides in the cytoplasm. The catalysed reaction is ATP + H2O + cellular proteinSide 1 = ADP + phosphate + cellular proteinSide 2.. Its function is as follows. Part of the Sec protein translocase complex. Interacts with the SecYEG preprotein conducting channel. Has a central role in coupling the hydrolysis of ATP to the transfer of proteins into and across the cell membrane, serving both as a receptor for the preprotein-SecB complex and as an ATP-driven molecular motor driving the stepwise translocation of polypeptide chains across the membrane. The sequence is that of Protein translocase subunit SecA from Bradyrhizobium diazoefficiens (strain JCM 10833 / BCRC 13528 / IAM 13628 / NBRC 14792 / USDA 110).